Consider the following 1563-residue polypeptide: Galactose-specific cell agglutination protein gsf2 (1563 aa).

The N-terminal stretch at 1–27 is a signal peptide; it reads MSVRRFLSTSARALLFTAALLPSLTSG. Tandem repeats lie at residues 203-280, 281-358, 359-436, 437-514, 515-592, 593-670, 671-750, 751-825, 826-869, 870-913, 914-957, 958-1001, 1002-1045, 1046-1089, 1090-1133, 1134-1140, 1141-1162, 1163-1184, 1185-1200, 1201-1221, 1223-1244, 1245-1266, 1267-1282, 1283-1304, 1305-1326, 1327-1348, 1349-1364, 1365-1386, and 1387-1397. An 8 X 78 AA approximate tandem repeats region spans residues 203–825; the sequence is TTTTTVGYPG…IPTGTTGTTT (623 aa). N-linked (GlcNAc...) asparagine glycosylation is found at N224, N263, N302, N341, N380, N419, N458, N497, N536, N575, N614, and N653. N784 carries N-linked (GlcNAc...) asparagine glycosylation. Positions 826–1140 are 8 X 44 AA approximate tandem repeats; it reads VVIQTPTTVT…TTTVVINTPT (315 aa). Residues 1135 to 1393 form a disordered region; sequence VINTPTTTGS…TQVTTATEVQ (259 aa). A 13 X 22 AA approximate tandem repeats region spans residues 1141–1397; that stretch reads TTGSEVLPTT…TATEVQPTTA (257 aa). N-linked (GlcNAc...) asparagine glycosylation is found at N1510, N1516, N1529, and N1532. A lipid anchor (GPI-anchor amidated serine) is attached at S1539. Residues 1540-1563 constitute a propeptide, removed in mature form; that stretch reads SAGANKPIAYLTFVSLFVYIVTLI.

Belongs to the mam3/map4 family.

It is found in the cell membrane. Its function is as follows. Galactose-specific adhesion protein essential for non-sexual flocculation and filamentous growth. Required for adhesion and filamentous growth through recognition of galactose residues on cell surface glycoconjugates. Induces flocculation when overexpressed. This is Galactose-specific cell agglutination protein gsf2 from Schizosaccharomyces pombe (strain 972 / ATCC 24843) (Fission yeast).